Reading from the N-terminus, the 217-residue chain is 3,4-dihydroxy-2-butanone 4-phosphate synthase (217 aa).

Residues 37-38 (RE), D42, 150-154 (RRGHT), and E174 each bind D-ribulose 5-phosphate. E38 serves as a coordination point for Mg(2+). Mg(2+) is bound at residue H153.

It belongs to the DHBP synthase family. As to quaternary structure, homodimer. Mg(2+) serves as cofactor. It depends on Mn(2+) as a cofactor.

The enzyme catalyses D-ribulose 5-phosphate = (2S)-2-hydroxy-3-oxobutyl phosphate + formate + H(+). Its pathway is cofactor biosynthesis; riboflavin biosynthesis; 2-hydroxy-3-oxobutyl phosphate from D-ribulose 5-phosphate: step 1/1. Catalyzes the conversion of D-ribulose 5-phosphate to formate and 3,4-dihydroxy-2-butanone 4-phosphate. This is 3,4-dihydroxy-2-butanone 4-phosphate synthase from Shewanella loihica (strain ATCC BAA-1088 / PV-4).